A 574-amino-acid chain; its full sequence is Probable cytochrome c oxidase subunit 1 (574 aa).

A helical membrane pass occupies residues 40 to 60 (IGIMYCVACFIFFFVGGLLAL). His-86 contacts Fe(II)-heme a. 6 helical membrane passes run 89-109 (IMLL…VLPL), 121-141 (LNAF…AGFI), 170-190 (LWIM…VNMI), 213-233 (ILVT…ALFG), 258-278 (LFWF…FGIV), and 290-310 (IFGY…SVAV). Positions 264 and 268 each coordinate Cu cation. A cross-link (1'-histidyl-3'-tyrosine (His-Tyr)) is located at residues 264–268 (HPEVY). Residues His-313 and His-314 each coordinate Cu cation. Helical transmembrane passes span 315 to 335 (MFAT…LIAV) and 359 to 379 (MLFS…GVLL). His-397 serves as a coordination point for heme a3. Helical transmembrane passes span 398-418 (FHYV…YFWF), 433-453 (LHFW…HWLG), and 476-496 (VSTI…WNVF). Residue His-399 coordinates Fe(II)-heme a.

This sequence belongs to the heme-copper respiratory oxidase family. As to quaternary structure, associates with subunits II, III and IV to form cytochrome c oxidase. It depends on Cu(2+) as a cofactor. Requires heme as cofactor.

It localises to the cell membrane. The catalysed reaction is 4 Fe(II)-[cytochrome c] + O2 + 8 H(+)(in) = 4 Fe(III)-[cytochrome c] + 2 H2O + 4 H(+)(out). It functions in the pathway energy metabolism; oxidative phosphorylation. In terms of biological role, cytochrome c oxidase is the component of the respiratory chain that catalyzes the reduction of oxygen to water. Subunits 1-3 form the functional core of the enzyme complex. CO I is the catalytic subunit of the enzyme. Electrons originating in cytochrome c are transferred via the copper A center of subunit 2 and heme A of subunit 1 to the bimetallic center formed by heme A3 and copper B. This is Probable cytochrome c oxidase subunit 1 (ctaD) from Mycobacterium leprae (strain TN).